The primary structure comprises 315 residues: Glutamine synthetase nodule isozyme (315 aa).

The GS beta-grasp domain occupies 19-99 (IIAEYIWVGG…VICDTYTPSG (81 aa)). In terms of domain architecture, GS catalytic spans 106–315 (KRHAAAKIFS…WGVANRGASI (210 aa)).

This sequence belongs to the glutamine synthetase family. In terms of assembly, homooctamer.

It localises to the cytoplasm. The enzyme catalyses L-glutamate + NH4(+) + ATP = L-glutamine + ADP + phosphate + H(+). The sequence is that of Glutamine synthetase nodule isozyme from Lupinus angustifolius (Narrow-leaved blue lupine).